Reading from the N-terminus, the 159-residue chain is Endoribonuclease YbeY (159 aa).

Zn(2+) contacts are provided by H124, H128, and H134.

The protein belongs to the endoribonuclease YbeY family. Requires Zn(2+) as cofactor.

It is found in the cytoplasm. Functionally, single strand-specific metallo-endoribonuclease involved in late-stage 70S ribosome quality control and in maturation of the 3' terminus of the 16S rRNA. This is Endoribonuclease YbeY from Halalkalibacterium halodurans (strain ATCC BAA-125 / DSM 18197 / FERM 7344 / JCM 9153 / C-125) (Bacillus halodurans).